We begin with the raw amino-acid sequence, 124 residues long: Small ribosomal subunit protein uS12 (124 aa).

Asp-89 carries the 3-methylthioaspartic acid modification.

The protein belongs to the universal ribosomal protein uS12 family. In terms of assembly, part of the 30S ribosomal subunit. Contacts proteins S8 and S17. May interact with IF1 in the 30S initiation complex.

Functionally, with S4 and S5 plays an important role in translational accuracy. Its function is as follows. Interacts with and stabilizes bases of the 16S rRNA that are involved in tRNA selection in the A site and with the mRNA backbone. Located at the interface of the 30S and 50S subunits, it traverses the body of the 30S subunit contacting proteins on the other side and probably holding the rRNA structure together. The combined cluster of proteins S8, S12 and S17 appears to hold together the shoulder and platform of the 30S subunit. The protein is Small ribosomal subunit protein uS12 of Blochmanniella floridana.